The chain runs to 413 residues: Glutamyl-tRNA reductase (413 aa).

Residues 49–52, Ser-105, 110–112, and Gln-116 contribute to the substrate site; these read TCNR and EPQ. Residue Cys-50 is the Nucleophile of the active site. 185–190 contacts NADP(+); that stretch reads GAGETI.

Belongs to the glutamyl-tRNA reductase family. In terms of assembly, homodimer.

The catalysed reaction is (S)-4-amino-5-oxopentanoate + tRNA(Glu) + NADP(+) = L-glutamyl-tRNA(Glu) + NADPH + H(+). The protein operates within porphyrin-containing compound metabolism; protoporphyrin-IX biosynthesis; 5-aminolevulinate from L-glutamyl-tRNA(Glu): step 1/2. In terms of biological role, catalyzes the NADPH-dependent reduction of glutamyl-tRNA(Glu) to glutamate 1-semialdehyde (GSA). The polypeptide is Glutamyl-tRNA reductase (Coxiella burnetii (strain Dugway 5J108-111)).